The chain runs to 313 residues: Ribosomal RNA small subunit methyltransferase H (313 aa).

S-adenosyl-L-methionine is bound by residues 35–37 (GGH), Asp55, Phe79, Asp101, and Gln108.

This sequence belongs to the methyltransferase superfamily. RsmH family.

It is found in the cytoplasm. It catalyses the reaction cytidine(1402) in 16S rRNA + S-adenosyl-L-methionine = N(4)-methylcytidine(1402) in 16S rRNA + S-adenosyl-L-homocysteine + H(+). Specifically methylates the N4 position of cytidine in position 1402 (C1402) of 16S rRNA. The chain is Ribosomal RNA small subunit methyltransferase H from Salmonella arizonae (strain ATCC BAA-731 / CDC346-86 / RSK2980).